We begin with the raw amino-acid sequence, 514 residues long: Lysine--tRNA ligase (514 aa).

Glu422 and Glu429 together coordinate Mg(2+).

The protein belongs to the class-II aminoacyl-tRNA synthetase family. In terms of assembly, homodimer. It depends on Mg(2+) as a cofactor.

The protein resides in the cytoplasm. The enzyme catalyses tRNA(Lys) + L-lysine + ATP = L-lysyl-tRNA(Lys) + AMP + diphosphate. This chain is Lysine--tRNA ligase, found in Psychrobacter arcticus (strain DSM 17307 / VKM B-2377 / 273-4).